A 276-amino-acid polypeptide reads, in one-letter code: Ribosomal RNA small subunit methyltransferase A (276 aa).

S-adenosyl-L-methionine-binding residues include N24, L26, G51, E72, D97, and N118.

Belongs to the class I-like SAM-binding methyltransferase superfamily. rRNA adenine N(6)-methyltransferase family. RsmA subfamily.

It localises to the cytoplasm. The enzyme catalyses adenosine(1518)/adenosine(1519) in 16S rRNA + 4 S-adenosyl-L-methionine = N(6)-dimethyladenosine(1518)/N(6)-dimethyladenosine(1519) in 16S rRNA + 4 S-adenosyl-L-homocysteine + 4 H(+). Functionally, specifically dimethylates two adjacent adenosines (A1518 and A1519) in the loop of a conserved hairpin near the 3'-end of 16S rRNA in the 30S particle. May play a critical role in biogenesis of 30S subunits. This chain is Ribosomal RNA small subunit methyltransferase A, found in Clostridium acetobutylicum (strain ATCC 824 / DSM 792 / JCM 1419 / IAM 19013 / LMG 5710 / NBRC 13948 / NRRL B-527 / VKM B-1787 / 2291 / W).